Reading from the N-terminus, the 308-residue chain is Cell division protein FtsQ (308 aa).

At Met1 to Ser53 the chain is on the cytoplasmic side. A helical transmembrane segment spans residues Leu54–Met74. Over Asn75–Val308 the chain is Periplasmic. One can recognise a POTRA domain in the interval Phe87–Arg155.

The protein belongs to the FtsQ/DivIB family. FtsQ subfamily.

It is found in the cell inner membrane. Its function is as follows. Essential cell division protein. The chain is Cell division protein FtsQ from Bartonella bacilliformis.